Reading from the N-terminus, the 342-residue chain is Dihydroorotate dehydrogenase (quinone) (342 aa).

Residues A60–K64 and T84 contribute to the FMN site. K64 provides a ligand contact to substrate. N109–F113 contacts substrate. FMN is bound by residues N137 and N170. N170 is a substrate binding site. The active-site Nucleophile is S173. N175 is a binding site for substrate. Positions 215 and 243 each coordinate FMN. N244–T245 is a binding site for substrate. FMN-binding positions include G266, G295, and Y316–S317.

This sequence belongs to the dihydroorotate dehydrogenase family. Type 2 subfamily. As to quaternary structure, monomer. FMN serves as cofactor.

It localises to the cell membrane. It carries out the reaction (S)-dihydroorotate + a quinone = orotate + a quinol. The protein operates within pyrimidine metabolism; UMP biosynthesis via de novo pathway; orotate from (S)-dihydroorotate (quinone route): step 1/1. Functionally, catalyzes the conversion of dihydroorotate to orotate with quinone as electron acceptor. The sequence is that of Dihydroorotate dehydrogenase (quinone) from Nitrosomonas eutropha (strain DSM 101675 / C91 / Nm57).